The sequence spans 337 residues: Ketol-acid reductoisomerase (NADP(+)) (337 aa).

Positions 3 to 183 (VEMFYDADAD…GGARAGVIKT (181 aa)) constitute a KARI N-terminal Rossmann domain. NADP(+)-binding positions include 26–29 (YGSQ), K49, S52, S54, and 84–87 (DTAQ). The active site involves H109. G135 is an NADP(+) binding site. Positions 184–329 (TFKDETETDL…KKLRDLMSWV (146 aa)) constitute a KARI C-terminal knotted domain. Positions 192, 196, 228, and 232 each coordinate Mg(2+). Residue S253 coordinates substrate.

Belongs to the ketol-acid reductoisomerase family. Mg(2+) serves as cofactor.

The catalysed reaction is (2R)-2,3-dihydroxy-3-methylbutanoate + NADP(+) = (2S)-2-acetolactate + NADPH + H(+). The enzyme catalyses (2R,3R)-2,3-dihydroxy-3-methylpentanoate + NADP(+) = (S)-2-ethyl-2-hydroxy-3-oxobutanoate + NADPH + H(+). The protein operates within amino-acid biosynthesis; L-isoleucine biosynthesis; L-isoleucine from 2-oxobutanoate: step 2/4. It functions in the pathway amino-acid biosynthesis; L-valine biosynthesis; L-valine from pyruvate: step 2/4. In terms of biological role, involved in the biosynthesis of branched-chain amino acids (BCAA). Catalyzes an alkyl-migration followed by a ketol-acid reduction of (S)-2-acetolactate (S2AL) to yield (R)-2,3-dihydroxy-isovalerate. In the isomerase reaction, S2AL is rearranged via a Mg-dependent methyl migration to produce 3-hydroxy-3-methyl-2-ketobutyrate (HMKB). In the reductase reaction, this 2-ketoacid undergoes a metal-dependent reduction by NADPH to yield (R)-2,3-dihydroxy-isovalerate. The protein is Ketol-acid reductoisomerase (NADP(+)) of Mycolicibacterium gilvum (strain PYR-GCK) (Mycobacterium gilvum (strain PYR-GCK)).